The following is an 867-amino-acid chain: Bifunctional isopimaradiene synthase, chloroplastic (867 aa).

The N-terminal 68 residues, Met-1–Tyr-68, are a transit peptide targeting the chloroplast. Lys-267 lines the substrate pocket. 2 residues coordinate Mg(2+): Asp-400 and Asp-402. Residues Asp-400–Asp-403 carry the DXDD motif motif. Lys-487 is a substrate binding site. Mg(2+) contacts are provided by Asp-619, Asp-623, Asn-763, Thr-767, and Glu-771. The DDXXD motif motif lies at Asp-619 to Asp-623.

It belongs to the terpene synthase family. Tpsd subfamily. Mg(2+) serves as cofactor.

It localises to the plastid. Its subcellular location is the chloroplast. It carries out the reaction (2E,6E,10E)-geranylgeranyl diphosphate = (+)-copalyl diphosphate. The enzyme catalyses (+)-copalyl diphosphate = isopimara-7,15-diene + diphosphate. It functions in the pathway terpene metabolism; oleoresin biosynthesis. In terms of biological role, involved in defensive oleoresin formation in conifers in response to insect attack or other injury. Involved in diterpene (C20) olefins biosynthesis. Bifunctional enzyme that catalyzes two sequential cyclizations of geranylgeranyl diphosphate (GGPP) to isopimara-7,15-diene. This is Bifunctional isopimaradiene synthase, chloroplastic (TPS-ISO) from Picea abies (Norway spruce).